Consider the following 780-residue polypeptide: Vezatin (780 aa).

Helical transmembrane passes span 140-160 and 162-182; these read ATPNTWDVSLLFAFISLLIMF and TCWIVSSWLVWGIILFLYLII. Residues 430–467 are a coiled coil; it reads VRSLQLHLKALLNEVIILEDELEKLVCTKETQELLSEA. Disordered regions lie at residues 620–718 and 757–780; these read DPVE…PRDT and QEQTFGDEEEEQLVEGGENEVEEK. Positions 624–643 are enriched in polar residues; the sequence is SVSNSEPPMNSDTEKVNSNA. Basic and acidic residues-rich tracts occupy residues 647–663 and 690–699; these read ETSKPCAGDKEDSRTEY and TMCHQHESEA. A compositionally biased stretch (low complexity) spans 702–711; the sequence is PQAAAAGATA. A compositionally biased stretch (acidic residues) spans 761–780; it reads FGDEEEEQLVEGGENEVEEK.

This sequence belongs to the vezatin family. In terms of assembly, interacts with USH2A (via the cytoplasmic region); the interaction associates VEZT with the USH2 complex at the stereocilia base. Interacts with myosin MYO7A and the cadherin-catenins complex. In terms of tissue distribution, expressed in developing cochlear hair cells. Isoform 1, isoform 2 and isoform 3 are expressed in testis. In the seminiferous epithelium, present exclusively in the acrosome of spermatids (at protein level).

The protein resides in the cell membrane. It localises to the cell projection. Its subcellular location is the stereocilium membrane. It is found in the cell junction. The protein localises to the adherens junction. The protein resides in the nucleus. It localises to the cytoplasmic vesicle. Its subcellular location is the secretory vesicle. It is found in the acrosome. Its function is as follows. Plays a pivotal role in the establishment of adherens junctions and their maintenance in adult life. Required for morphogenesis of the preimplantation embryo, and for the implantation process. The protein is Vezatin of Mus musculus (Mouse).